The primary structure comprises 60 residues: Metallothionein B (60 aa).

Residues M1–C28 are beta. A divalent metal cation-binding residues include C4, C6, C12, C14, C18, C20, C23, C25, C28, C32, C33, C35, C36, C40, C43, C47, C49, C54, C58, and C59. Positions K29 to Q60 are alpha.

The protein belongs to the metallothionein superfamily. Type 1 family.

In terms of biological role, metallothioneins have a high content of cysteine residues that bind various heavy metals. In Dicentrarchus labrax (European seabass), this protein is Metallothionein B (mtb).